A 212-amino-acid chain; its full sequence is Uridine kinase (212 aa).

13-20 (GGSGSGKT) contacts ATP.

The protein belongs to the uridine kinase family.

The protein localises to the cytoplasm. The catalysed reaction is uridine + ATP = UMP + ADP + H(+). It catalyses the reaction cytidine + ATP = CMP + ADP + H(+). The protein operates within pyrimidine metabolism; CTP biosynthesis via salvage pathway; CTP from cytidine: step 1/3. It functions in the pathway pyrimidine metabolism; UMP biosynthesis via salvage pathway; UMP from uridine: step 1/1. The protein is Uridine kinase of Bacillus anthracis (strain A0248).